The chain runs to 315 residues: CRISPR-associated endonuclease Cas1 1 (315 aa).

E144, H208, and E223 together coordinate Mn(2+).

Belongs to the CRISPR-associated endonuclease Cas1 family. In terms of assembly, homodimer, forms a heterotetramer with a Cas2 homodimer. The cofactor is Mg(2+). Mn(2+) is required as a cofactor.

CRISPR (clustered regularly interspaced short palindromic repeat), is an adaptive immune system that provides protection against mobile genetic elements (viruses, transposable elements and conjugative plasmids). CRISPR clusters contain spacers, sequences complementary to antecedent mobile elements, and target invading nucleic acids. CRISPR clusters are transcribed and processed into CRISPR RNA (crRNA). Acts as a dsDNA endonuclease. Involved in the integration of spacer DNA into the CRISPR cassette. This is CRISPR-associated endonuclease Cas1 1 from Thermus thermophilus (strain ATCC 27634 / DSM 579 / HB8).